The chain runs to 455 residues: UDP-glycosyltransferase 87A2 (455 aa).

Residue M1 is modified to N-acetylmethionine. Residues S278, 327–329, 344–352, and 366–369 each bind UDP-alpha-D-glucose; these read CDQ, HCGFNSTLE, and FWDQ.

Belongs to the UDP-glycosyltransferase family.

This is UDP-glycosyltransferase 87A2 (UGT87A2) from Arabidopsis thaliana (Mouse-ear cress).